A 208-amino-acid chain; its full sequence is Small ribosomal subunit protein uS4 (208 aa).

An S4 RNA-binding domain is found at 97 to 158; sequence TRLDNVIYRM…RAQKYLCVQE (62 aa).

The protein belongs to the universal ribosomal protein uS4 family. As to quaternary structure, part of the 30S ribosomal subunit. Contacts protein S5. The interaction surface between S4 and S5 is involved in control of translational fidelity.

One of the primary rRNA binding proteins, it binds directly to 16S rRNA where it nucleates assembly of the body of the 30S subunit. Functionally, with S5 and S12 plays an important role in translational accuracy. This is Small ribosomal subunit protein uS4 from Xylella fastidiosa (strain M23).